A 473-amino-acid chain; its full sequence is Asparagine--tRNA ligase (473 aa).

It belongs to the class-II aminoacyl-tRNA synthetase family. Homodimer.

It localises to the cytoplasm. The catalysed reaction is tRNA(Asn) + L-asparagine + ATP = L-asparaginyl-tRNA(Asn) + AMP + diphosphate + H(+). The sequence is that of Asparagine--tRNA ligase from Treponema denticola (strain ATCC 35405 / DSM 14222 / CIP 103919 / JCM 8153 / KCTC 15104).